We begin with the raw amino-acid sequence, 171 residues long: Disulfide bond formation protein B (171 aa).

Residues 1-10 (MQRLLTYRAL) lie on the Cytoplasmic side of the membrane. The helical transmembrane segment at 11-27 (NFILFIASVVAMLFAII) threads the bilayer. Residues 28–46 (FLQNYKGLEPCPLCIFQRI) are Periplasmic-facing. Cys-38 and Cys-41 are joined by a disulfide. A helical transmembrane segment spans residues 47-63 (GLMVMGGFSLIAAVGHP). Residues 64–70 (KKMGMQL) are Cytoplasmic-facing. The chain crosses the membrane as a helical span at residues 71–88 (LLWIGSMAGILWSAGVAA). Residues 89–145 (RHVWIQHLPADQVPACGPGLDYFLEALPMKQVINQVLSGSGECAEISWRFLGLSIPE) lie on the Periplasmic side of the membrane. Cys-104 and Cys-131 are joined by a disulfide. Residues 146–164 (QALILFTALILVNLLVLWR) form a helical membrane-spanning segment. Over 165-171 (IISKRTA) the chain is Cytoplasmic.

The protein belongs to the DsbB family.

The protein localises to the cell inner membrane. Its function is as follows. Required for disulfide bond formation in some periplasmic proteins. Acts by oxidizing the DsbA protein. In Psychrobacter sp. (strain PRwf-1), this protein is Disulfide bond formation protein B.